A 620-amino-acid chain; its full sequence is Glutathione-regulated potassium-efflux system protein KefC (620 aa).

The next 12 helical transmembrane spans lie at 4–24 (HTLL…PIAV), 26–46 (LGLG…PWGL), 54–74 (SILH…GLEL), 90–110 (GALQ…FLGL), 114–134 (VAEL…MQAM), 149–169 (FAVL…IPLL), 178–198 (LGAF…VVLL), 218–238 (VFSA…EEVG), 270–290 (GLLL…GTLV), 294–314 (LRIL…LWLV), 327–347 (WFAV…GAAQ), and 359–379 (ALTL…MLLT). The RCK N-terminal domain maps to 399 to 518 (QPRVIVAGFG…AGVAMPERET (120 aa)). Positions 599–620 (QGTAEGKHSGEAADEPEVKPSI) are disordered.

This sequence belongs to the monovalent cation:proton antiporter 2 (CPA2) transporter (TC 2.A.37) family. KefC subfamily. As to quaternary structure, homodimer. Interacts with the regulatory subunit KefF.

The protein resides in the cell inner membrane. Functionally, pore-forming subunit of a potassium efflux system that confers protection against electrophiles. Catalyzes K(+)/H(+) antiport. The chain is Glutathione-regulated potassium-efflux system protein KefC from Salmonella heidelberg (strain SL476).